Consider the following 219-residue polypeptide: Phosphatidylserine decarboxylase proenzyme (219 aa).

S188 functions as the Schiff-base intermediate with substrate; via pyruvic acid in the catalytic mechanism. A Pyruvic acid (Ser); by autocatalysis modification is found at S188.

The protein belongs to the phosphatidylserine decarboxylase family. PSD-A subfamily. Heterodimer of a large membrane-associated beta subunit and a small pyruvoyl-containing alpha subunit. Pyruvate is required as a cofactor. Post-translationally, is synthesized initially as an inactive proenzyme. Formation of the active enzyme involves a self-maturation process in which the active site pyruvoyl group is generated from an internal serine residue via an autocatalytic post-translational modification. Two non-identical subunits are generated from the proenzyme in this reaction, and the pyruvate is formed at the N-terminus of the alpha chain, which is derived from the carboxyl end of the proenzyme. The post-translation cleavage follows an unusual pathway, termed non-hydrolytic serinolysis, in which the side chain hydroxyl group of the serine supplies its oxygen atom to form the C-terminus of the beta chain, while the remainder of the serine residue undergoes an oxidative deamination to produce ammonia and the pyruvoyl prosthetic group on the alpha chain.

The protein localises to the cell membrane. The enzyme catalyses a 1,2-diacyl-sn-glycero-3-phospho-L-serine + H(+) = a 1,2-diacyl-sn-glycero-3-phosphoethanolamine + CO2. It functions in the pathway phospholipid metabolism; phosphatidylethanolamine biosynthesis; phosphatidylethanolamine from CDP-diacylglycerol: step 2/2. In terms of biological role, catalyzes the formation of phosphatidylethanolamine (PtdEtn) from phosphatidylserine (PtdSer). The chain is Phosphatidylserine decarboxylase proenzyme from Geobacter sp. (strain M21).